A 212-amino-acid polypeptide reads, in one-letter code: Ribosomal RNA small subunit methyltransferase G (212 aa).

S-adenosyl-L-methionine is bound by residues G80, L85, 131 to 132, and R146; that span reads AE.

Belongs to the methyltransferase superfamily. RNA methyltransferase RsmG family.

It is found in the cytoplasm. The enzyme catalyses guanosine(527) in 16S rRNA + S-adenosyl-L-methionine = N(7)-methylguanosine(527) in 16S rRNA + S-adenosyl-L-homocysteine. Functionally, specifically methylates the N7 position of guanine in position 527 of 16S rRNA. This is Ribosomal RNA small subunit methyltransferase G from Xanthomonas oryzae pv. oryzae (strain MAFF 311018).